We begin with the raw amino-acid sequence, 334 residues long: D-fructose 1,6-bisphosphatase class 2/sedoheptulose 1,7-bisphosphatase (334 aa).

Aspartate 33, glutamate 57, aspartate 85, and glutamate 88 together coordinate Mn(2+). Substrate is bound by residues 88–90, tyrosine 119, 164–166, and 186–188; these read EGT, RAR, and DGD. Glutamate 213 serves as a coordination point for Mn(2+).

Belongs to the FBPase class 2 family. As to quaternary structure, homotetramer. Mn(2+) is required as a cofactor.

It catalyses the reaction beta-D-fructose 1,6-bisphosphate + H2O = beta-D-fructose 6-phosphate + phosphate. The catalysed reaction is D-sedoheptulose 1,7-bisphosphate + H2O = D-sedoheptulose 7-phosphate + phosphate. It participates in carbohydrate biosynthesis; Calvin cycle. In terms of biological role, catalyzes the hydrolysis of fructose 1,6-bisphosphate (Fru 1,6-P2) and sedoheptulose 1,7-bisphosphate (Sed 1,7-P2) to fructose 6-phosphate and sedoheptulose 7-phosphate, respectively. This chain is D-fructose 1,6-bisphosphatase class 2/sedoheptulose 1,7-bisphosphatase, found in Parasynechococcus marenigrum (strain WH8102).